Here is an 871-residue protein sequence, read N- to C-terminus: Patatin-like phospholipase domain-containing protein CNBE2340 (871 aa).

A disordered region spans residues 20 to 53; sequence NEDSPLSPRSFSLPPESPQLSTASPIHQRVSRKR. The span at 23–33 shows a compositional bias: low complexity; it reads SPLSPRSFSLP. A helical membrane pass occupies residues 68 to 88; it reads WPLLFFIFFIIYLEFSAYVIT. Residues 243–435 form the PNPLA domain; that stretch reads LCLSGGASFG…REDIPLGSLH (193 aa). The GXSXG motif lies at 274-278; sequence GTSAG. Ser276 functions as the Nucleophile in the catalytic mechanism. The Proton acceptor role is filled by Asp422. Disordered stretches follow at residues 586 to 707, 720 to 748, and 760 to 871; these read ALSH…NFGD, LSSP…QRFR, and VSES…QDGA. Polar residues-rich tracts occupy residues 594-606 and 687-706; these read NDPA…TNPE and PTHS…SNFG. Low complexity predominate over residues 721–748; the sequence is SSPFRSIRSNTSSSSNNVQSPSSSQRFR. Residues 798–820 are compositionally biased toward basic and acidic residues; that stretch reads VESHSDRSEDEMLHSGANVKEEY.

It belongs to the PLPL family.

It localises to the membrane. Functionally, probable lipid hydrolase. This chain is Patatin-like phospholipase domain-containing protein CNBE2340, found in Cryptococcus neoformans var. neoformans serotype D (strain B-3501A) (Filobasidiella neoformans).